Here is a 1323-residue protein sequence, read N- to C-terminus: Alpha-factor-transporting ATPase (1323 aa).

Basic and acidic residues predominate over residues Met1–Ser10. The tract at residues Met1–Asp23 is disordered. Residues Pro12–Asp23 show a composition bias toward low complexity. N-linked (GlcNAc...) asparagine glycosylation occurs at Asn37. A helical transmembrane segment spans residues Trp42–Asn62. In terms of domain architecture, ABC transmembrane type-1 1 spans Ile45–Thr337. N-linked (GlcNAc...) asparagine glycosylation occurs at Asn83. The helical transmembrane segment at Leu93–Phe113 threads the bilayer. Asn136 is a glycosylation site (N-linked (GlcNAc...) asparagine). The next 4 membrane-spanning stretches (helical) occupy residues Ile169–Tyr189, Trp192–Phe212, Val281–Leu301, and Phe315–Leu335. Positions Ile373–Gly609 constitute an ABC transporter 1 domain. Residue Gly408–Ser415 coordinates ATP. A glycan (N-linked (GlcNAc...) asparagine) is linked at Asn450. The chain crosses the membrane as a helical span at residues Leu677–Tyr697. The region spanning Leu678–Arg969 is the ABC transmembrane type-1 2 domain. A glycan (N-linked (GlcNAc...) asparagine) is linked at Asn714. The chain crosses the membrane as a helical span at residues Cys724–Leu744. N-linked (GlcNAc...) asparagine glycans are attached at residues Asn777 and Asn789. The next 3 membrane-spanning stretches (helical) occupy residues Phe801 to Val821, Leu828 to Leu848, and Ile909 to Gly929. N-linked (GlcNAc...) asparagine glycosylation is present at Asn939. Residues Ser941–Ile961 form a helical membrane-spanning segment. Asn991, Asn1030, and Asn1039 each carry an N-linked (GlcNAc...) asparagine glycan. The region spanning Ile1035–Thr1321 is the ABC transporter 2 domain. Gly1071 to Ser1078 is a binding site for ATP. The N-linked (GlcNAc...) asparagine glycan is linked to Asn1097. The chain crosses the membrane as a helical span at residues Gly1120–Ile1140. N-linked (GlcNAc...) asparagine glycans are attached at residues Asn1143, Asn1149, and Asn1157. Residues Ile1170–Ile1190 traverse the membrane as a helical segment. An N-linked (GlcNAc...) asparagine glycan is attached at Asn1192. A compositionally biased stretch (acidic residues) spans Ser1194 to Asn1208. Positions Ser1194–Ser1217 are disordered.

Belongs to the ABC transporter superfamily. Alpha-factor sex pheromone exporter (TC 3.A.1.206) family.

It localises to the membrane. It carries out the reaction an [alpha-factor](in) + ATP + H2O = an [alpha-factor](out) + ADP + phosphate + H(+). This chain is Alpha-factor-transporting ATPase (HST6), found in Candida albicans (strain WO-1) (Yeast).